The sequence spans 240 residues: uncharacterized protein (240 aa).

Residues 73 to 93 form a helical membrane-spanning segment; it reads LLGCLYFFIYFVAPTLGPVLF.

Belongs to the universal ribosomal protein uS3 family.

It is found in the mitochondrion membrane. This is an uncharacterized protein from Arabidopsis thaliana (Mouse-ear cress).